Here is a 205-residue protein sequence, read N- to C-terminus: Lymphotoxin-alpha (205 aa).

Residues 1–34 form the signal peptide; that stretch reads MTPPGRLYLPRVRGTRLLFLLLGLLLALPPRAKG. Residues 63–205 enclose the THD domain; that stretch reads PAAHLVGDPS…SSVFFGAFAL (143 aa). Residue asparagine 96 is glycosylated (N-linked (GlcNAc...) asparagine). An intrachain disulfide couples cysteine 120 to cysteine 156.

It belongs to the tumor necrosis factor family. In terms of assembly, homotrimer, and heterotrimer of either two LTB and one LTA subunits or (less prevalent) two LTA and one LTB subunits. Interacts with TNFRSF14.

It localises to the secreted. It is found in the membrane. Cytokine that in its homotrimeric form binds to TNFRSF1A/TNFR1, TNFRSF1B/TNFBR and TNFRSF14/HVEM. In its heterotrimeric form with LTB binds to TNFRSF3/LTBR. Lymphotoxin is produced by lymphocytes and is cytotoxic for a wide range of tumor cells in vitro and in vivo. This Marmota monax (Woodchuck) protein is Lymphotoxin-alpha (LTA).